Reading from the N-terminus, the 55-residue chain is ATP synthase F(0) complex subunit 8 (55 aa).

A helical transmembrane segment spans residues 4 to 24 (LNPAPWFAILVFSWLVFLTVI). The tract at residues 34–55 (TNEPTSQSTEKAKPEPWNWPWH) is disordered.

The protein belongs to the ATPase protein 8 family. In terms of assembly, component of the ATP synthase complex composed at least of ATP5F1A/subunit alpha, ATP5F1B/subunit beta, ATP5MC1/subunit c (homooctomer), MT-ATP6/subunit a, MT-ATP8/subunit 8, ATP5ME/subunit e, ATP5MF/subunit f, ATP5MG/subunit g, ATP5MK/subunit k, ATP5MJ/subunit j, ATP5F1C/subunit gamma, ATP5F1D/subunit delta, ATP5F1E/subunit epsilon, ATP5PF/subunit F6, ATP5PB/subunit b, ATP5PD/subunit d, ATP5PO/subunit OSCP. ATP synthase complex consists of a soluble F(1) head domain (subunits alpha(3) and beta(3)) - the catalytic core - and a membrane F(0) domain - the membrane proton channel (subunits c, a, 8, e, f, g, k and j). These two domains are linked by a central stalk (subunits gamma, delta, and epsilon) rotating inside the F1 region and a stationary peripheral stalk (subunits F6, b, d, and OSCP).

The protein resides in the mitochondrion membrane. Its function is as follows. Subunit 8, of the mitochondrial membrane ATP synthase complex (F(1)F(0) ATP synthase or Complex V) that produces ATP from ADP in the presence of a proton gradient across the membrane which is generated by electron transport complexes of the respiratory chain. ATP synthase complex consist of a soluble F(1) head domain - the catalytic core - and a membrane F(1) domain - the membrane proton channel. These two domains are linked by a central stalk rotating inside the F(1) region and a stationary peripheral stalk. During catalysis, ATP synthesis in the catalytic domain of F(1) is coupled via a rotary mechanism of the central stalk subunits to proton translocation. In vivo, can only synthesize ATP although its ATP hydrolase activity can be activated artificially in vitro. Part of the complex F(0) domain. In Oncorhynchus mykiss (Rainbow trout), this protein is ATP synthase F(0) complex subunit 8.